A 121-amino-acid chain; its full sequence is Large ribosomal subunit protein bL19 (121 aa).

The protein belongs to the bacterial ribosomal protein bL19 family.

Functionally, this protein is located at the 30S-50S ribosomal subunit interface and may play a role in the structure and function of the aminoacyl-tRNA binding site. In Porphyromonas gingivalis (strain ATCC BAA-308 / W83), this protein is Large ribosomal subunit protein bL19.